The sequence spans 285 residues: Polyamine aminopropyltransferase (285 aa).

The PABS domain maps to 5 to 241; the sequence is DNWYIEHFQP…GWWSVTMASK (237 aa). Q35 is an S-methyl-5'-thioadenosine binding site. Positions 66 and 90 each coordinate spermidine. S-methyl-5'-thioadenosine is bound by residues D110 and 141–142; that span reads DG. D160 (proton acceptor) is an active-site residue. 160–163 contributes to the spermidine binding site; sequence DSTD. P167 serves as a coordination point for S-methyl-5'-thioadenosine.

The protein belongs to the spermidine/spermine synthase family. As to quaternary structure, homodimer or homotetramer.

It is found in the cytoplasm. The enzyme catalyses S-adenosyl 3-(methylsulfanyl)propylamine + putrescine = S-methyl-5'-thioadenosine + spermidine + H(+). Its pathway is amine and polyamine biosynthesis; spermidine biosynthesis; spermidine from putrescine: step 1/1. Its function is as follows. Catalyzes the irreversible transfer of a propylamine group from the amino donor S-adenosylmethioninamine (decarboxy-AdoMet) to putrescine (1,4-diaminobutane) to yield spermidine. The polypeptide is Polyamine aminopropyltransferase (Xanthomonas oryzae pv. oryzae (strain MAFF 311018)).